Consider the following 265-residue polypeptide: uncharacterized protein (265 aa).

The N-terminal stretch at 1-20 (MSRAMALFFVLCWIQDEIVL) is a signal peptide. A helical membrane pass occupies residues 192–212 (IIAAVSGVAILMAIVLLLLGL).

The protein localises to the membrane. This is an uncharacterized protein from Homo sapiens (Human).